A 192-amino-acid chain; its full sequence is Small ribosomal subunit protein bS16 (192 aa).

The segment covering 149 to 161 (EKKAAEAKAKAEA) has biased composition (basic and acidic residues). The interval 149-192 (EKKAAEAKAKAEAEAAAAAEEATETEETPMEAAAEEAPAAESAE) is disordered. The segment covering 178–192 (MEAAAEEAPAAESAE) has biased composition (low complexity).

It belongs to the bacterial ribosomal protein bS16 family.

This chain is Small ribosomal subunit protein bS16, found in Porphyromonas gingivalis (strain ATCC 33277 / DSM 20709 / CIP 103683 / JCM 12257 / NCTC 11834 / 2561).